The sequence spans 154 residues: MKELFNILLINGPNLNLLGHREPKIYGNTTLSQLTHALTKEATTFNIHLHHIQSNSESTLINKIHNSKNNINYIIINAGAFSHTSIALRDALIGINIPFIEVHISNIYTRENFRSHSWLSDISSGVICGLGLDGYFWALRTAIKRIKKISTLQV.

Y26 acts as the Proton acceptor in catalysis. Substrate-binding residues include N77, H83, and D90. H103 serves as the catalytic Proton donor. Residues 104-105 (IS) and R114 each bind substrate.

It belongs to the type-II 3-dehydroquinase family. Homododecamer.

It catalyses the reaction 3-dehydroquinate = 3-dehydroshikimate + H2O. The protein operates within metabolic intermediate biosynthesis; chorismate biosynthesis; chorismate from D-erythrose 4-phosphate and phosphoenolpyruvate: step 3/7. Catalyzes a trans-dehydration via an enolate intermediate. The chain is 3-dehydroquinate dehydratase from Buchnera aphidicola subsp. Baizongia pistaciae (strain Bp).